The primary structure comprises 350 residues: UDP-rhamnose/UDP-galactose transporter 3 (350 aa).

10 helical membrane-spanning segments follow: residues 12–32, 41–61, 81–101, 104–124, 133–153, 160–180, 200–220, 224–244, 257–277, and 286–306; these read AVSD…IIMA, GFAF…TALV, LIWF…SLML, VGFY…MEWI, EVKI…VTDV, FICA…IGSL, AFSL…KFIM, MSSG…FCNI, SFQV…WLLF, and VAGM…MELE.

The protein belongs to the TPT transporter family. TPT (TC 2.A.7.9) subfamily.

It is found in the golgi apparatus membrane. In terms of biological role, nucleotide-sugar transporter that transports UDP-rhamnose or UDP-galactose and UMP in a strict counter-exchange mode. This Arabidopsis thaliana (Mouse-ear cress) protein is UDP-rhamnose/UDP-galactose transporter 3.